A 276-amino-acid polypeptide reads, in one-letter code: NAD(+)--protein-threonine ADP-ribosyltransferase (276 aa).

As to quaternary structure, interacts directly with host ubiquitin.

It is found in the secreted. The protein localises to the host cell. The enzyme catalyses L-threonyl-[protein] + NAD(+) = O-(ADP-D-ribosyl)-L-threonyl-[protein] + nicotinamide + H(+). Its function is as follows. ADP-ribosyltransferase that specifically modifies host ubiquitin on 'Thr-66' residue, which causes the shutdown of polyubiquitin synthesis and disrupts the recognition and reversal of polyubiquitin in host cells during infection. Threonine ADP-ribosylation of ubiquitin prevents the transfer of ubiquitin from ubiquitin-activating enzyme E1 to ubiquitin-conjugating enzyme E2, which inhibits subsequent ubiquitin activation and leads to the shutdown of polyubiquitin synthesis in host cells. The modification also causes dysfunction of polyubiquitin chains in cells, thereby blocking host ubiquitin signaling. ADP-ribosylation by CteC is likely irreversible. Plays a crucial role in bacterial colonization in mice during infection. This Chromobacterium violaceum (strain ATCC 12472 / DSM 30191 / JCM 1249 / CCUG 213 / NBRC 12614 / NCIMB 9131 / NCTC 9757 / MK) protein is NAD(+)--protein-threonine ADP-ribosyltransferase.